The chain runs to 322 residues: Daunorubicin resistance ATP-binding protein DrrA2 (322 aa).

Positions 6 to 236 (VRAEAMEKRY…VGGDRIEVVV (231 aa)) constitute an ABC transporter domain. 38-45 (GPNGAGKT) is an ATP binding site.

The protein belongs to the ABC transporter superfamily. Drug exporter-1 (DrugE1) (TC 3.A.1.105) family. In terms of assembly, the complex is probably composed of two ATP-binding proteins (DrrA2) and two transmembrane proteins (DrrB2).

The protein localises to the cell membrane. The enzyme catalyses daunorubicin(in) + ATP + H2O = daunorubicin(out) + ADP + phosphate + H(+). Part of the ABC transporter complex DrrA2B2 involved in daunorubicin efflux. Responsible for energy coupling to the transport system. Confers self-resistance to daunorubicin, an antibiotic produced by S.coeruleorubidus. This chain is Daunorubicin resistance ATP-binding protein DrrA2, found in Streptomyces coeruleorubidus.